The chain runs to 189 residues: Interferon alpha-12 (189 aa).

A signal peptide spans 1–23; it reads MARLCAFLMTLLVMSYWSTCSLG. 2 cysteine pairs are disulfide-bonded: Cys-24–Cys-122 and Cys-52–Cys-162. N-linked (GlcNAc...) asparagine glycosylation is present at Asn-101.

The protein belongs to the alpha/beta interferon family.

The protein resides in the secreted. Its function is as follows. Produced by macrophages, IFN-alpha have antiviral activities. Interferon stimulates the production of two enzymes: a protein kinase and an oligoadenylate synthetase. The protein is Interferon alpha-12 (Ifna12) of Mus musculus (Mouse).